A 689-amino-acid polypeptide reads, in one-letter code: Beta-adrenergic receptor kinase 1 (689 aa).

Residues 1–190 (MADLEAVLAD…ELNIHLTMND (190 aa)) form an N-terminal region. The RGS domain maps to 54 to 175 (TFEKIFSQKL…IESDKFTRFC (122 aa)). The Protein kinase domain occupies 191 to 453 (FSVHRIIGRG…AQEVKESPFF (263 aa)). ATP contacts are provided by residues 197 to 205 (IGRGGFGEV) and Lys-220. Asp-317 (proton acceptor) is an active-site residue. The AGC-kinase C-terminal domain maps to 454 to 521 (RSLDWQMVFL…TISERWQQEV (68 aa)). Residues 558–652 (DCIMHGYMSK…WKKELRDAYR (95 aa)) enclose the PH domain. Ser-670 is modified (phosphoserine).

Belongs to the protein kinase superfamily. AGC Ser/Thr protein kinase family. GPRK subfamily. As to quaternary structure, interacts with the heterodimer formed by GNB1 and GNG2. Interacts with GIT1. Interacts with, and phosphorylates chemokine-stimulated CCR5. Interacts with ARRB1. Interacts with LPAR1 and LPAR2. Interacts with RALA in response to LPAR1 activation. ADRBK1 and RALA mutually inhibit each other's binding to LPAR1. Interacts with ADRB2. As to expression, expressed in peripheral blood leukocytes.

The protein localises to the cytoplasm. Its subcellular location is the cell membrane. It localises to the postsynapse. It is found in the presynapse. The catalysed reaction is [beta-adrenergic receptor] + ATP = [beta-adrenergic receptor]-phosphate + ADP + H(+). With respect to regulation, in contrast to other AGC family kinases, the catalytic activity is solely regulated by the binding of substrates and ligands, not by phosphorylation of the kinase domain. In terms of biological role, specifically phosphorylates the agonist-occupied form of the beta-adrenergic and closely related receptors, probably inducing a desensitization of them. Key regulator of LPAR1 signaling. Competes with RALA for binding to LPAR1 thus affecting the signaling properties of the receptor. Desensitizes LPAR1 and LPAR2 in a phosphorylation-independent manner. Positively regulates ciliary smoothened (SMO)-dependent Hedgehog (Hh) signaling pathway by facilitating the trafficking of SMO into the cilium and the stimulation of SMO activity. Inhibits relaxation of airway smooth muscle in response to blue light. The chain is Beta-adrenergic receptor kinase 1 from Homo sapiens (Human).